Here is a 102-residue protein sequence, read N- to C-terminus: Mitochondrial import inner membrane translocase subunit Tim10 B (102 aa).

Residues 27–51 (CFQRCVPSLHHRALDAEEEACLHSC) carry the Twin CX3C motif motif. Intrachain disulfides connect Cys27/Cys51 and Cys31/Cys47.

Component of the TIM22 complex, which core is composed of TIMM22, associated with TIMM10 (TIMM10A and/or TIMM10B), TIMM9, AGK and TIMM29.

It localises to the mitochondrion inner membrane. Component of the TIM22 complex, a complex that mediates the import and insertion of multi-pass transmembrane proteins into the mitochondrial inner membrane. The TIM22 complex forms a twin-pore translocase that uses the membrane potential as the external driving force. In the TIM22 complex, it may act as a docking point for the soluble 70 kDa complex that guides the target proteins in transit through the aqueous mitochondrial intermembrane space. In Pongo abelii (Sumatran orangutan), this protein is Mitochondrial import inner membrane translocase subunit Tim10 B (TIMM10B).